Here is a 427-residue protein sequence, read N- to C-terminus: Cholecystokinin receptor type A (427 aa).

The Extracellular segment spans residues 1–41 (MDAVASLLGNASGIPPPCELGLDNETLFCLDQPPPSKEWQP). 2 N-linked (GlcNAc...) asparagine glycosylation sites follow: asparagine 10 and asparagine 24. Residues cysteine 18 and cysteine 29 are joined by a disulfide bond. Residues 42–67 (AVQILLYSLIFLLSVLGNTLVITVLI) traverse the membrane as a helical segment. Residues 68–77 (RNKRMRTVTN) are Cytoplasmic-facing. The chain crosses the membrane as a helical span at residues 78 to 104 (IFLLSLAISDLMLCLFCMPFNLIPNLL). Over 105–115 (KDFIFGSALCK) the chain is Extracellular. A disulfide bridge connects residues cysteine 114 and cysteine 196. Residues 116–137 (TTTYLMGTSVSVSTLNLVAISL) form a helical membrane-spanning segment. Residues 138–157 (ERYGAICKPLQSRVWQTKSH) are Cytoplasmic-facing. A helical membrane pass occupies residues 158-178 (ALKVIAATWCLSFAIMTPYPI). The Extracellular segment spans residues 179 to 210 (YSNLVPFTKTNNQTANMCRFLLPSDVMQQAWH). A glycan (N-linked (GlcNAc...) asparagine) is linked at asparagine 190. The helical transmembrane segment at 211-234 (TFLLLILFLIPGIVMMVAYGMISL) threads the bilayer. Over 235 to 312 (ELYQGIKFDA…TLMAKKRVIR (78 aa)) the chain is Cytoplasmic. A helical transmembrane segment spans residues 313–333 (MLMVIVVLFFLCWMPIFSANA). Topologically, residues 334-348 (WRAYDTVSAERRLSG) are extracellular. The chain crosses the membrane as a helical span at residues 349–372 (TPISFILLLSYTSSCVNPIIYCFM). The Cytoplasmic segment spans residues 373 to 427 (NRRFRLGFMATFPCCPNPGPPGPRAEAGEEEEGRTTRASLSRYSYSHMSASAPPS). Residue cysteine 386 is the site of S-palmitoyl cysteine attachment. Residues 391–427 (GPPGPRAEAGEEEEGRTTRASLSRYSYSHMSASAPPS) are disordered. Residues 411–421 (SLSRYSYSHMS) show a composition bias toward polar residues.

Belongs to the G-protein coupled receptor 1 family.

The protein localises to the cell membrane. In terms of biological role, receptor for cholecystokinin. Mediates pancreatic growth and enzyme secretion, smooth muscle contraction of the gall bladder and stomach. Has a 1000-fold higher affinity for CCK rather than for gastrin. It modulates feeding and dopamine-induced behavior in the central and peripheral nervous system. This receptor mediates its action by association with G proteins that activate a phosphatidylinositol-calcium second messenger system. The chain is Cholecystokinin receptor type A (CCKAR) from Oryctolagus cuniculus (Rabbit).